The sequence spans 348 residues: 3-isopropylmalate dehydrogenase (348 aa).

NAD(+) is bound at residue 76–87 (GPKWTDPNNRPE). Arginine 94, arginine 104, arginine 132, and aspartate 217 together coordinate substrate. Residues aspartate 217, aspartate 241, and aspartate 245 each coordinate Mg(2+). 275–287 (GSAPDIAGKNVAN) lines the NAD(+) pocket.

It belongs to the isocitrate and isopropylmalate dehydrogenases family. LeuB type 1 subfamily. Homodimer. It depends on Mg(2+) as a cofactor. The cofactor is Mn(2+).

The protein localises to the cytoplasm. It carries out the reaction (2R,3S)-3-isopropylmalate + NAD(+) = 4-methyl-2-oxopentanoate + CO2 + NADH. Its pathway is amino-acid biosynthesis; L-leucine biosynthesis; L-leucine from 3-methyl-2-oxobutanoate: step 3/4. In terms of biological role, catalyzes the oxidation of 3-carboxy-2-hydroxy-4-methylpentanoate (3-isopropylmalate) to 3-carboxy-4-methyl-2-oxopentanoate. The product decarboxylates to 4-methyl-2 oxopentanoate. The protein is 3-isopropylmalate dehydrogenase of Staphylococcus aureus (strain bovine RF122 / ET3-1).